The following is a 271-amino-acid chain: 2,3,4,5-tetrahydropyridine-2,6-dicarboxylate N-succinyltransferase (271 aa).

Substrate is bound by residues arginine 102 and aspartate 139.

This sequence belongs to the transferase hexapeptide repeat family. As to quaternary structure, homotrimer.

The protein resides in the cytoplasm. It carries out the reaction (S)-2,3,4,5-tetrahydrodipicolinate + succinyl-CoA + H2O = (S)-2-succinylamino-6-oxoheptanedioate + CoA. It functions in the pathway amino-acid biosynthesis; L-lysine biosynthesis via DAP pathway; LL-2,6-diaminopimelate from (S)-tetrahydrodipicolinate (succinylase route): step 1/3. In Coxiella burnetii (strain RSA 331 / Henzerling II), this protein is 2,3,4,5-tetrahydropyridine-2,6-dicarboxylate N-succinyltransferase.